The chain runs to 426 residues: Histidinol dehydrogenase (426 aa).

NAD(+) is bound by residues tyrosine 126, glutamine 188, and asparagine 210. Residues serine 233, glutamine 255, and histidine 258 each contribute to the substrate site. Glutamine 255 and histidine 258 together coordinate Zn(2+). Residues glutamate 323 and histidine 324 each act as proton acceptor in the active site. Histidine 324, aspartate 357, glutamate 411, and histidine 416 together coordinate substrate. Aspartate 357 serves as a coordination point for Zn(2+). Position 416 (histidine 416) interacts with Zn(2+).

It belongs to the histidinol dehydrogenase family. It depends on Zn(2+) as a cofactor.

It catalyses the reaction L-histidinol + 2 NAD(+) + H2O = L-histidine + 2 NADH + 3 H(+). The protein operates within amino-acid biosynthesis; L-histidine biosynthesis; L-histidine from 5-phospho-alpha-D-ribose 1-diphosphate: step 9/9. Catalyzes the sequential NAD-dependent oxidations of L-histidinol to L-histidinaldehyde and then to L-histidine. This chain is Histidinol dehydrogenase, found in Heliobacterium mobile (Heliobacillus mobilis).